Consider the following 345-residue polypeptide: MNDEMKGKSGKVKVMYVRSDDDSDKRTHNPRTGKGGGRPGKSRADGGRRPARDDKQSQPRDRKWEDSPWRTVSRAPGDETPEKADHGGISGKSFIDPEVLRRQRAEETRVYGENACQALFQSRPEAIVRAWFIQSVTPRFKEALRWMAANRKAYHVVDEAELTKASGTEHHGGVCFLIKKRNGTTVQQWVSQAGAQDCVLALENESNPHNLGGMMRSCAHFGVKGVVVQDAALLESGAAIRTAEGGAEHVQPITGDNIVNVLDDFRQAGYTVVTTSSEQGKPLFKTSLPAKMVLVLGQEYEGLPDAARDPNDLRVKIDGTGNVAGLNISVATGVLLGEWWRQNKA.

The disordered stretch occupies residues 1–98; the sequence is MNDEMKGKSG…ISGKSFIDPE (98 aa). Basic and acidic residues-rich tracts occupy residues 18–27, 42–68, and 76–86; these read RSDDDSDKRT, SRADGGRRPARDDKQSQPRDRKWEDSP, and PGDETPEKADH.

The protein belongs to the class IV-like SAM-binding methyltransferase superfamily. RNA methyltransferase TrmH family.

This is an uncharacterized protein from Escherichia coli O157:H7.